Reading from the N-terminus, the 70-residue chain is Myotoxin (70 aa).

The first 22 residues, 1–22 (MKILYLLFAFLFLAFLSEPGNA), serve as a signal peptide directing secretion. Cystine bridges form between C26/C58, C33/C52, and C40/C59.

This sequence belongs to the crotamine-myotoxin family. Monomer. In terms of tissue distribution, expressed by the venom gland.

The protein localises to the secreted. Its function is as follows. Cationic peptide that possesses multiple functions. It acts as a cell-penetrating peptide (CPP), and as a potent voltage-gated potassium channel (Kv) inhibitor. It exhibits antimicrobial activities, hind limb paralysis, and severe muscle necrosis by a non-enzymatic mechanism. The protein is Myotoxin of Crotalus adamanteus (Eastern diamondback rattlesnake).